A 471-amino-acid polypeptide reads, in one-letter code: Glutamate--tRNA ligase (471 aa).

A 'HIGH' region motif is present at residues 9–19; the sequence is PSPTGYLHVGG. Cys-98, Cys-100, Cys-125, and His-127 together coordinate Zn(2+). A 'KMSKS' region motif is present at residues 237 to 241; that stretch reads KLSKR. Residue Lys-240 coordinates ATP.

It belongs to the class-I aminoacyl-tRNA synthetase family. Glutamate--tRNA ligase type 1 subfamily. As to quaternary structure, monomer. It depends on Zn(2+) as a cofactor.

It localises to the cytoplasm. The enzyme catalyses tRNA(Glu) + L-glutamate + ATP = L-glutamyl-tRNA(Glu) + AMP + diphosphate. In terms of biological role, catalyzes the attachment of glutamate to tRNA(Glu) in a two-step reaction: glutamate is first activated by ATP to form Glu-AMP and then transferred to the acceptor end of tRNA(Glu). The sequence is that of Glutamate--tRNA ligase from Escherichia coli (strain SMS-3-5 / SECEC).